We begin with the raw amino-acid sequence, 390 residues long: UPF0229 protein Cbei_0567 (390 aa).

Residues 77 to 108 form a disordered region; the sequence is SGVGNEKRGEKLGNGNKKLAKGNQGAGNEEGD. A compositionally biased stretch (low complexity) spans 89-103; sequence GNGNKKLAKGNQGAG.

This sequence belongs to the UPF0229 family.

The protein is UPF0229 protein Cbei_0567 of Clostridium beijerinckii (strain ATCC 51743 / NCIMB 8052) (Clostridium acetobutylicum).